The chain runs to 119 residues: Small ribosomal subunit protein bS6 (119 aa).

The segment at 95–119 (AVTEPSPLAKGNEKREDRKESEDAE) is disordered. The segment covering 105 to 119 (GNEKREDRKESEDAE) has biased composition (basic and acidic residues).

This sequence belongs to the bacterial ribosomal protein bS6 family.

In terms of biological role, binds together with bS18 to 16S ribosomal RNA. The chain is Small ribosomal subunit protein bS6 from Halorhodospira halophila (strain DSM 244 / SL1) (Ectothiorhodospira halophila (strain DSM 244 / SL1)).